A 100-amino-acid polypeptide reads, in one-letter code: Urease subunit gamma (100 aa).

Belongs to the urease gamma subunit family. In terms of assembly, heterotrimer of UreA (gamma), UreB (beta) and UreC (alpha) subunits. Three heterotrimers associate to form the active enzyme.

The protein localises to the cytoplasm. It catalyses the reaction urea + 2 H2O + H(+) = hydrogencarbonate + 2 NH4(+). It functions in the pathway nitrogen metabolism; urea degradation; CO(2) and NH(3) from urea (urease route): step 1/1. The sequence is that of Urease subunit gamma from Enterobacter sp. (strain 638).